Here is a 115-residue protein sequence, read N- to C-terminus: Migration and invasion enhancer 1 (115 aa).

Polar residues predominate over residues 1-10 (MSGDTGTTSV). A disordered region spans residues 1–22 (MSGDTGTTSVAPPPGETEPGHG). The residue at position 2 (Ser-2) is an N-acetylserine. An intrachain disulfide couples Cys-30 to Cys-33. Residue Cys-112 is the site of S-geranylgeranyl cysteine attachment. Residues 113 to 115 (VIL) constitute a propeptide, removed in mature form.

Belongs to the SelWTH family. As to quaternary structure, interacts with GPX1. Post-translationally, isoprenylation facilitates association with the plasma membrane and enhances the migratory phenotype of cells by inducing increased filopodia formation.

It is found in the cytoplasm. The protein resides in the cytosol. Its subcellular location is the cell membrane. Functionally, increases cell migration by inducing filopodia formation at the leading edge of migrating cells. Plays a role in regulation of apoptosis, possibly through control of CASP3. May be involved in a redox-related process. This chain is Migration and invasion enhancer 1 (MIEN1), found in Bos taurus (Bovine).